The primary structure comprises 1218 residues: Formin-A (1218 aa).

The region spanning methionine 1–valine 108 is the C2 domain. The GBD/FH3 domain occupies glutamate 139 to glycine 539. Residues leucine 563–lysine 638 are a coiled coil. A disordered region spans residues glutamine 634 to valine 762. Residues alanine 649–glycine 747 are compositionally biased toward pro residues. An FH1 domain is found at proline 652–proline 737. The 397-residue stretch at arginine 759–leucine 1155 folds into the FH2 domain. Residues serine 1034–serine 1061 adopt a coiled-coil conformation. 2 disordered regions span residues lysine 1153–valine 1179 and lysine 1198–leucine 1218. A DAD domain is found at glycine 1174–glutamine 1209.

This sequence belongs to the formin homology family. Diaphanous subfamily. As to quaternary structure, interacts (via GBD/FH3 domain) with activated Rho-GTPases.

Its function is as follows. Formins play an important role in the nucleation of actin and the formation of linear actin filaments. This Dictyostelium discoideum (Social amoeba) protein is Formin-A (forA).